Reading from the N-terminus, the 97-residue chain is Mitochondrial import inner membrane translocase subunit Tim8 A (97 aa).

The short motif at 43 to 66 (CWEKCMDKPGPKLDSRAEACFVNC) is the Twin CX3C motif element. 2 disulfides stabilise this stretch: C43–C66 and C47–C62. Residues S57, S87, S94, and S96 each carry the phosphoserine modification.

The protein belongs to the small Tim family. Heterohexamer; composed of 3 copies of TIMM8A and 3 copies of TIMM13, named soluble 70 kDa complex. Associates with the TIM22 complex, whose core is composed of TIMM22.

It is found in the mitochondrion inner membrane. Functionally, mitochondrial intermembrane chaperone that participates in the import and insertion of some multi-pass transmembrane proteins into the mitochondrial inner membrane. Also required for the transfer of beta-barrel precursors from the TOM complex to the sorting and assembly machinery (SAM complex) of the outer membrane. Acts as a chaperone-like protein that protects the hydrophobic precursors from aggregation and guide them through the mitochondrial intermembrane space. The TIMM8-TIMM13 complex mediates the import of proteins such as TIMM23, SLC25A12/ARALAR1 and SLC25A13/ARALAR2, while the predominant TIMM9-TIMM10 70 kDa complex mediates the import of much more proteins. In Bos taurus (Bovine), this protein is Mitochondrial import inner membrane translocase subunit Tim8 A (TIMM8A).